We begin with the raw amino-acid sequence, 172 residues long: RNA pyrophosphohydrolase (172 aa).

A Nudix hydrolase domain is found at 6–149 (GYRLNVGIVI…KRDVYRRAMK (144 aa)). The short motif at 38 to 59 (GGIDDGETPEQAMFRELYEEVG) is the Nudix box element.

This sequence belongs to the Nudix hydrolase family. RppH subfamily. The cofactor is a divalent metal cation.

Its function is as follows. Accelerates the degradation of transcripts by removing pyrophosphate from the 5'-end of triphosphorylated RNA, leading to a more labile monophosphorylated state that can stimulate subsequent ribonuclease cleavage. The protein is RNA pyrophosphohydrolase of Vibrio vulnificus (strain CMCP6).